The following is a 355-amino-acid chain: MIEEKKKCIGLIFGGYSNEHDVSISSAKTVFNAFNSEINKQRFNVKAFYINKYGDWIDNDISVKILIGEIEHKKTKKQELFNQKKINFLDGIEFQNIDIWFPLLHGFNGEDGSIHGLLKFTNKPLVGCGILGSALGMDKILMKTIFSNLKIPQVNYLVIQNEDLNNLEVKNKLIIEIIKKLNFPVFVKPSNSGSSLGISKVINKSALLKALEKAWEIDARILVEEGLETREIECGIIGNSELLTSEIGEVEYGSDWYDYDSKYNSNNKITIPAKIDSKITKQIKEIAIQSCRTLNIFGFARVDFFLEKSSNKIFLNEINTIPGFTKKSMFPMLWEASGLNIEQLVAKLVDISLDL.

In terms of domain architecture, ATP-grasp spans 143–350 (KTIFSNLKIP…IEQLVAKLVD (208 aa)). Residue 178-233 (IKKLNFPVFVKPSNSGSSLGISKVINKSALLKALEKAWEIDARILVEEGLETREIE) coordinates ATP. Mg(2+) is bound by residues Asp-303, Glu-317, and Asn-319.

It belongs to the D-alanine--D-alanine ligase family. Mg(2+) is required as a cofactor. Mn(2+) serves as cofactor.

Its subcellular location is the cytoplasm. It carries out the reaction 2 D-alanine + ATP = D-alanyl-D-alanine + ADP + phosphate + H(+). It functions in the pathway cell wall biogenesis; peptidoglycan biosynthesis. Functionally, cell wall formation. This Prochlorococcus marinus (strain MIT 9312) protein is D-alanine--D-alanine ligase.